Here is a 608-residue protein sequence, read N- to C-terminus: Glutamyl-tRNA(Gln) amidotransferase subunit E (608 aa).

Residues Pro-401–Glu-428 are disordered.

It belongs to the GatB/GatE family. GatE subfamily. As to quaternary structure, heterodimer of GatD and GatE.

The catalysed reaction is L-glutamyl-tRNA(Gln) + L-glutamine + ATP + H2O = L-glutaminyl-tRNA(Gln) + L-glutamate + ADP + phosphate + H(+). Functionally, allows the formation of correctly charged Gln-tRNA(Gln) through the transamidation of misacylated Glu-tRNA(Gln) in organisms which lack glutaminyl-tRNA synthetase. The reaction takes place in the presence of glutamine and ATP through an activated gamma-phospho-Glu-tRNA(Gln). The GatDE system is specific for glutamate and does not act on aspartate. The chain is Glutamyl-tRNA(Gln) amidotransferase subunit E from Pyrobaculum arsenaticum (strain DSM 13514 / JCM 11321 / PZ6).